The following is a 211-amino-acid chain: Arginine exporter protein ArgO (211 aa).

Transmembrane regions (helical) follow at residues 1 to 21, 37 to 57, 68 to 88, 111 to 131, 147 to 167, and 179 to 199; these read MISY…PLGP, LMIA…GIFG, LLAL…FGAL, IIAT…DTFV, WFAL…ALLA, and AQRI…FQLA.

The protein belongs to the LysE/ArgO transporter (TC 2.A.75) family.

The protein localises to the cell inner membrane. It carries out the reaction L-arginine(in) = L-arginine(out). Functionally, involved in the export of arginine. Important to control the intracellular level of arginine and the correct balance between arginine and lysine. The chain is Arginine exporter protein ArgO from Salmonella newport (strain SL254).